The sequence spans 155 residues: Calmodulin, flagellar (155 aa).

4 EF-hand domains span residues 14-49 (EQIA…LGQN), 50-85 (PTEA…KMKD), 87-122 (DNEE…LGEK), and 123-155 (LTDE…MMQK). Positions 27, 29, 31, 33, 38, 63, 65, 67, 69, 74, 100, 102, 104, 111, 136, 138, 140, 142, and 147 each coordinate Ca(2+).

The protein belongs to the calmodulin family.

The protein localises to the cell projection. It localises to the cilium. The protein resides in the flagellum. Functionally, calmodulin mediates the control of a large number of enzymes, ion channels and other proteins by Ca(2+). Among the enzymes to be stimulated by the calmodulin-Ca(2+) complex are a number of protein kinases and phosphatases. The polypeptide is Calmodulin, flagellar (CAM1) (Naegleria gruberi (Amoeba)).